A 309-amino-acid chain; its full sequence is Probable porphobilinogen deaminase (309 aa).

C233 is subject to S-(dipyrrolylmethanemethyl)cysteine.

The protein belongs to the HMBS family. It depends on dipyrromethane as a cofactor.

It carries out the reaction 4 porphobilinogen + H2O = hydroxymethylbilane + 4 NH4(+). The protein operates within porphyrin-containing compound metabolism; protoporphyrin-IX biosynthesis; coproporphyrinogen-III from 5-aminolevulinate: step 2/4. In terms of biological role, tetrapolymerization of the monopyrrole PBG into the hydroxymethylbilane pre-uroporphyrinogen in several discrete steps. The chain is Probable porphobilinogen deaminase from Methanococcoides burtonii (strain DSM 6242 / NBRC 107633 / OCM 468 / ACE-M).